Here is a 444-residue protein sequence, read N- to C-terminus: ATP-dependent protease ATPase subunit HslU (444 aa).

Residues Ile20 and 62 to 67 (GVGKTE) contribute to the ATP site. A disordered region spans residues 130–158 (EDRILDALVPPPRGASGEPERGEDNSARQ). The ATP site is built by Asp257, Glu322, and Arg394.

It belongs to the ClpX chaperone family. HslU subfamily. In terms of assembly, a double ring-shaped homohexamer of HslV is capped on each side by a ring-shaped HslU homohexamer. The assembly of the HslU/HslV complex is dependent on binding of ATP.

Its subcellular location is the cytoplasm. In terms of biological role, ATPase subunit of a proteasome-like degradation complex; this subunit has chaperone activity. The binding of ATP and its subsequent hydrolysis by HslU are essential for unfolding of protein substrates subsequently hydrolyzed by HslV. HslU recognizes the N-terminal part of its protein substrates and unfolds these before they are guided to HslV for hydrolysis. The sequence is that of ATP-dependent protease ATPase subunit HslU from Bordetella bronchiseptica (strain ATCC BAA-588 / NCTC 13252 / RB50) (Alcaligenes bronchisepticus).